Consider the following 309-residue polypeptide: Ribosomal RNA small subunit methyltransferase H (309 aa).

S-adenosyl-L-methionine-binding positions include 33-35, Asp-53, Phe-79, Asp-100, and Gln-107; that span reads GGH.

It belongs to the methyltransferase superfamily. RsmH family.

It localises to the cytoplasm. It carries out the reaction cytidine(1402) in 16S rRNA + S-adenosyl-L-methionine = N(4)-methylcytidine(1402) in 16S rRNA + S-adenosyl-L-homocysteine + H(+). Specifically methylates the N4 position of cytidine in position 1402 (C1402) of 16S rRNA. This chain is Ribosomal RNA small subunit methyltransferase H, found in Clostridium botulinum (strain Loch Maree / Type A3).